Reading from the N-terminus, the 281-residue chain is Carbonic anhydrase (281 aa).

Positions 106, 161, and 164 each coordinate Zn(2+).

This sequence belongs to the beta-class carbonic anhydrase family. It depends on Zn(2+) as a cofactor.

It localises to the cytoplasm. The protein localises to the nucleus. The protein resides in the mitochondrion intermembrane space. It carries out the reaction hydrogencarbonate + H(+) = CO2 + H2O. Its activity is regulated as follows. Amines and amino acids act as activators of catalytic activity, whereas natural product-based phenols, dithiocarbamates, aliphatic and aromatic carboxylates, boronic acids, and sulfonamides act as inhibitors of enzymatic activity. Also inhibited by anions such as cyanide and carbonate, and to a lesser extent by sulfate, phenylboronic, and phenyl arsonic acid. Its function is as follows. Catalyzes the reversible hydration of CO(2) to H(2)CO(3). The main role may be to provide inorganic carbon for the bicarbonate-dependent carboxylation reactions catalyzed by pyruvate carboxylase, acetyl-CoA carboxylase and carbamoyl-phosphate synthetase. Involved in protection against oxidative damage. Acts as a CO(2) chemosensor and induces CO(2)-mediated filamentation. Essential for pathological growth in niches where sufficient CO(2) is not supplied by the host. Necessary for white-to-opaque switching at low CO(2) concentrations. In Candida albicans (strain SC5314 / ATCC MYA-2876) (Yeast), this protein is Carbonic anhydrase (NCE103).